Reading from the N-terminus, the 171-residue chain is uncharacterized protein (171 aa).

This is an uncharacterized protein from Mycobacterium tuberculosis (strain ATCC 25618 / H37Rv).